A 282-amino-acid chain; its full sequence is Osteoclast-associated immunoglobulin-like receptor (282 aa).

Positions 1 to 18 are cleaved as a signal peptide; sequence MALVLILQLLTLWPLCHT. Ig-like domains are found at residues 22 to 116 and 126 to 219; these read PSVP…SQPS and ELPR…SWEG. The N-linked (GlcNAc...) asparagine glycan is linked to N48. A disulfide bridge links C53 with C100. N145 carries an N-linked (GlcNAc...) asparagine glycan. The disordered stretch occupies residues 221–282; it reads GPEARPASSA…PAPPPSDPGV (62 aa). Pro residues predominate over residues 273–282; it reads PAPPPSDPGV.

It belongs to the leukocyte receptor complex/polymeric immunoglobulin receptor (PIR/LRC) family.

It is found in the secreted. Its subcellular location is the cell membrane. Its function is as follows. Regulator of osteoclastogenesis which plays an important bone-specific function in osteoclast differentiation. This chain is Osteoclast-associated immunoglobulin-like receptor (OSCAR), found in Homo sapiens (Human).